We begin with the raw amino-acid sequence, 360 residues long: uncharacterized protein (360 aa).

6 helical membrane-spanning segments follow: residues 12–32 (ILPL…ITQI), 52–72 (VVLV…VIAV), 96–116 (IQLA…AYYI), 278–298 (IIWP…FLRY), 306–326 (FMPV…HFIL), and 336–356 (FIFA…YLLV).

Its subcellular location is the cell membrane. This is an uncharacterized protein from Rickettsia prowazekii (strain Madrid E).